The sequence spans 287 residues: Large ribosomal subunit protein uL2 (287 aa).

The disordered stretch occupies residues 221-287; the sequence is RGSVMNPCDH…SKRSRGGRDS (67 aa). The span at 258–287 shows a compositional bias: basic residues; the sequence is KTRKKNKPSNKLVVRRRRRISKRSRGGRDS.

Belongs to the universal ribosomal protein uL2 family. Part of the 50S ribosomal subunit. Forms a bridge to the 30S subunit in the 70S ribosome.

In terms of biological role, one of the primary rRNA binding proteins. Required for association of the 30S and 50S subunits to form the 70S ribosome, for tRNA binding and peptide bond formation. It has been suggested to have peptidyltransferase activity; this is somewhat controversial. Makes several contacts with the 16S rRNA in the 70S ribosome. The chain is Large ribosomal subunit protein uL2 from Prochlorococcus marinus (strain MIT 9215).